Consider the following 410-residue polypeptide: Digeranylgeranylglycerophospholipid reductase (410 aa).

FAD-binding residues include Ala15, Glu34, Val118, Asp286, Gly298, and Ile299. The a 2,3-bis-O-(geranylgeranyl)-sn-glycerol 1-phospholipid site is built by Lys343 and Ala379.

This sequence belongs to the geranylgeranyl reductase family. DGGGPL reductase subfamily. FAD serves as cofactor.

It carries out the reaction a 2,3-bis-O-phytanyl-sn-glycerol 1-phospholipid + 8 A = a 2,3-bis-O-(geranylgeranyl)-sn-glycerol 1-phospholipid + 8 AH2. The enzyme catalyses 2,3-bis-O-(phytanyl)-sn-glycerol 1-phosphate + 8 A = 2,3-bis-O-(geranylgeranyl)-sn-glycerol 1-phosphate + 8 AH2. The catalysed reaction is CDP-2,3-bis-O-(geranylgeranyl)-sn-glycerol + 8 AH2 = CDP-2,3-bis-O-(phytanyl)-sn-glycerol + 8 A. It catalyses the reaction archaetidylserine + 8 AH2 = 2,3-bis-O-phytanyl-sn-glycero-3-phospho-L-serine + 8 A. It participates in membrane lipid metabolism; glycerophospholipid metabolism. Functionally, is involved in the reduction of 2,3-digeranylgeranylglycerophospholipids (unsaturated archaeols) into 2,3-diphytanylglycerophospholipids (saturated archaeols) in the biosynthesis of archaeal membrane lipids. Can fully reduce the unsaturated isoprenoid side chains of membrane phospholipids and glycolipids. Is also able to reduce the omega-position isoprene of dolichol phosphate. The sequence is that of Digeranylgeranylglycerophospholipid reductase from Haloferax volcanii (strain ATCC 29605 / DSM 3757 / JCM 8879 / NBRC 14742 / NCIMB 2012 / VKM B-1768 / DS2) (Halobacterium volcanii).